We begin with the raw amino-acid sequence, 409 residues long: Outer membrane protein YopM (409 aa).

LRR repeat units lie at residues 72–91 (QAHE…ELPP), 92–113 (HLES…PQSL), 114–131 (KSLL…DLPP), 132–153 (LLEY…QNSS), 154–173 (FLKI…DLPP), 174–195 (SLEF…QNLP), 196–215 (FLTA…DLPL), 216–237 (SLES…QNLP), 238–257 (FLTT…DLPP), 258–279 (SLEA…PQSL), 280–297 (TFLD…ELPP), 298–317 (NLYY…DLPP), 318–339 (SLEE…PPRL), 340–357 (ERLI…ELPQ), and 358–379 (NLKQ…PESV). Ca(2+) is bound by residues Asn-246 and Asp-266. Positions 307, 308, and 326 each coordinate Ca(2+).

It belongs to the LRR-containing bacterial E3 ligase family. As to quaternary structure, homotetramer forming a hollow cylinder with an inner diameter of approximately 35 angstroms.

The protein resides in the cell outer membrane. Its subcellular location is the secreted. Functionally, effector proteins function to alter host cell physiology and promote bacterial survival in host tissues. The chain is Outer membrane protein YopM (yopM) from Yersinia pestis.